Consider the following 287-residue polypeptide: Elongation factor Ts (287 aa).

The interval 80-83 is involved in Mg(2+) ion dislocation from EF-Tu; that stretch reads TDFL.

It belongs to the EF-Ts family.

It is found in the cytoplasm. Associates with the EF-Tu.GDP complex and induces the exchange of GDP to GTP. It remains bound to the aminoacyl-tRNA.EF-Tu.GTP complex up to the GTP hydrolysis stage on the ribosome. In Pseudomonas putida (strain ATCC 700007 / DSM 6899 / JCM 31910 / BCRC 17059 / LMG 24140 / F1), this protein is Elongation factor Ts.